The sequence spans 143 residues: Large ribosomal subunit protein uL11 (143 aa).

This sequence belongs to the universal ribosomal protein uL11 family. In terms of assembly, part of the ribosomal stalk of the 50S ribosomal subunit. Interacts with L10 and the large rRNA to form the base of the stalk. L10 forms an elongated spine to which L12 dimers bind in a sequential fashion forming a multimeric L10(L12)X complex. Post-translationally, one or more lysine residues are methylated.

Forms part of the ribosomal stalk which helps the ribosome interact with GTP-bound translation factors. The sequence is that of Large ribosomal subunit protein uL11 from Ectopseudomonas mendocina (strain ymp) (Pseudomonas mendocina).